The following is a 346-amino-acid chain: Histidinol-phosphate aminotransferase (346 aa).

Residue K209 is modified to N6-(pyridoxal phosphate)lysine.

Belongs to the class-II pyridoxal-phosphate-dependent aminotransferase family. Histidinol-phosphate aminotransferase subfamily. As to quaternary structure, homodimer. Requires pyridoxal 5'-phosphate as cofactor.

The catalysed reaction is L-histidinol phosphate + 2-oxoglutarate = 3-(imidazol-4-yl)-2-oxopropyl phosphate + L-glutamate. It participates in amino-acid biosynthesis; L-histidine biosynthesis; L-histidine from 5-phospho-alpha-D-ribose 1-diphosphate: step 7/9. The chain is Histidinol-phosphate aminotransferase from Vibrio vulnificus (strain CMCP6).